A 407-amino-acid chain; its full sequence is MGCSASKDTTNSKDGAASKGGKDGKTTADRKVAWERIRCAIPRDKDAESKSRRIELFKRFDTNGTGKLSFREVLDGCYSILKLDEFTTHLPDIVQRAFDKAKDLGNKVKGVGEEDLVEFLEFRLMLCYIYDIFELTVMFDTMDKDGSLLLELQEFKEALPKWKEWGVDITDATTVFNEIDTNGSGVVTFDEFSCWAVTKKLQVCGDPDGEGAAKTTADRKVAWERIRCAIPRDKDAESKSRRIELFKQFDTNGTGKLGFREVLDGCYSILKLDEFTTHLPDIVQRAFDKAKDLGNKVKGVGEEDLVEFLEFRLMLCYIYDIFELTVMFDTMDKDGSLLLELQEFKEALKKWKEWGVDITDATTVFNEIDTNGSGVVTFDEFSCWAVTKKLQVCGDPDGEENGANEGN.

The tract at residues 1-27 (MGCSASKDTTNSKDGAASKGGKDGKTT) is disordered. The interval 25–399 (KTTADRKVAW…LQVCGDPDGE (375 aa)) is 2 X 186 AA almost perfect repeats. Residues 48–83 (ESKSRRIELFKRFDTNGTGKLSFREVLDGCYSILKL) enclose the EF-hand 1 domain. Residues Asp61, Asn63, Thr65, Lys67, and Glu72 each coordinate Ca(2+). Residues 110 to 121 (GVGEEDLVEFLE) are ancestral calcium site 2. 3 consecutive EF-hand domains span residues 130 to 165 (YDIF…WKEW), 167 to 202 (VDIT…KKLQ), and 237 to 272 (ESKS…ILKL). Asp143, Asp145, Ser147, Glu154, Asp180, Asn182, Ser184, Glu191, Asp250, Asn252, Thr254, Lys256, and Glu261 together coordinate Ca(2+). The interval 299–310 (GVGEEDLVEFLE) is ancestral calcium site 6. 2 consecutive EF-hand domains span residues 319–354 (YDIF…WKEW) and 356–391 (VDIT…KKLQ). Ca(2+)-binding residues include Asp332, Asp334, Ser336, Glu343, Asp369, Asn371, Ser373, and Glu380.

Belongs to the calflagin family.

It is found in the cell projection. Its subcellular location is the cilium. The protein resides in the flagellum. May contribute to the rapid motility of the trypanosomes, playing a role either in flagellar structure or in calcium metabolism. Could alternate between a GDP-bound inactive form to a calcium/GTP-bound active form. The chain is Flagellar calcium-binding protein TB-44A from Trypanosoma brucei brucei.